Consider the following 484-residue polypeptide: Oxysterol-binding protein-related protein 2 (484 aa).

Residues Ser19 and Ser20 each carry the phosphoserine modification. Positions Asp35–Arg61 are disordered. A 1,2-diacyl-sn-glycero-3-phospho-(1D-myo-inositol-4,5-bisphosphate) contacts are provided by residues Lys90 and His178–His179. Basic and acidic residues-rich tracts occupy residues Lys319–Asn340 and Ser424–Thr450. Disordered regions lie at residues Lys319 to Ala348 and Ala423 to Ser454. Residue Glu431–Arg435 coordinates a 1,2-diacyl-sn-glycero-3-phospho-(1D-myo-inositol-4,5-bisphosphate).

This sequence belongs to the OSBP family. Monomer. Homotetramer; phosphatidylinositol-4,5-bisphosphate binding promotes formation of stable tetramers. Interacts with DIAPH1. Detected in cochlea, in inner and outer hair cells in the organ of Corti (at protein level).

The protein localises to the cytoplasm. Its subcellular location is the cytosol. It is found in the lipid droplet. It localises to the cell membrane. Intracellular transport protein that binds sterols and phospholipids and mediates lipid transport between intracellular compartments. Increases plasma membrane cholesterol levels and decreases phosphatidylinositol-4,5-bisphosphate levels in the cell membrane. Binds phosphoinositides, such as phosphatidylinositol-4,5-bisphosphate. Exhibits strong binding to phosphatidic acid and weak binding to phosphatidylinositol 3-phosphate. Binds cholesterol, dehydroergosterol, 22(R)-hydroxycholesterol and 25-hydroxycholesterol (in vitro). This is Oxysterol-binding protein-related protein 2 (Osbpl2) from Mus musculus (Mouse).